The chain runs to 378 residues: Carbamoyl phosphate synthase small chain (378 aa).

Positions 1 to 189 (MTKPAILALA…DSHPEIAASE (189 aa)) are CPSase. 3 residues coordinate L-glutamine: Ser-47, Gly-241, and Gly-243. The Glutamine amidotransferase type-1 domain maps to 193 to 378 (HVVAYDYGVK…RFIDAMAKRR (186 aa)). The active-site Nucleophile is Cys-269. Residues Leu-270, Gln-273, Asn-311, Gly-313, and Phe-314 each contribute to the L-glutamine site. Catalysis depends on residues His-353 and Glu-355.

Belongs to the CarA family. In terms of assembly, composed of two chains; the small (or glutamine) chain promotes the hydrolysis of glutamine to ammonia, which is used by the large (or ammonia) chain to synthesize carbamoyl phosphate. Tetramer of heterodimers (alpha,beta)4.

It catalyses the reaction hydrogencarbonate + L-glutamine + 2 ATP + H2O = carbamoyl phosphate + L-glutamate + 2 ADP + phosphate + 2 H(+). The catalysed reaction is L-glutamine + H2O = L-glutamate + NH4(+). Its pathway is amino-acid biosynthesis; L-arginine biosynthesis; carbamoyl phosphate from bicarbonate: step 1/1. The protein operates within pyrimidine metabolism; UMP biosynthesis via de novo pathway; (S)-dihydroorotate from bicarbonate: step 1/3. Small subunit of the glutamine-dependent carbamoyl phosphate synthetase (CPSase). CPSase catalyzes the formation of carbamoyl phosphate from the ammonia moiety of glutamine, carbonate, and phosphate donated by ATP, constituting the first step of 2 biosynthetic pathways, one leading to arginine and/or urea and the other to pyrimidine nucleotides. The small subunit (glutamine amidotransferase) binds and cleaves glutamine to supply the large subunit with the substrate ammonia. This Pseudomonas syringae pv. tomato (strain ATCC BAA-871 / DC3000) protein is Carbamoyl phosphate synthase small chain.